Here is a 214-residue protein sequence, read N- to C-terminus: Epoxide hydrolase EphH (214 aa).

S28 serves as the catalytic Nucleophile. Catalysis depends on charge relay system residues D156 and H186.

This sequence belongs to the AB hydrolase superfamily.

It carries out the reaction an epoxide + H2O = an ethanediol. Inhibited by AUDA, a known epoxide hydrolase inhibitor. Functionally, catalyzes the hydrolysis of epoxide-containing substrates. In vitro, catalyzes the hydrolysis of the synthetic compounds PHOME and styrene oxide. Plays an essential role in subverting phagosomal acidification. Plays a major role in the survival of M.tuberculosis (Mtb) during in vitro acidic stress and protects Mtb in response to phagosomal acidification inside macrophages. Also supports Mtb growth under the nutrient-deprived condition at pH 7.0. The polypeptide is Epoxide hydrolase EphH (Mycobacterium tuberculosis (strain ATCC 25618 / H37Rv)).